The primary structure comprises 258 residues: uncharacterized protein (258 aa).

The NADP(+) site is built by I17, D53, N80, R113, Y145, K149, I178, and S180. Y145 (proton donor) is an active-site residue. Catalysis depends on K149, which acts as the Lowers pKa of active site Tyr.

It belongs to the short-chain dehydrogenases/reductases (SDR) family.

The protein resides in the cytoplasm. The protein localises to the nucleus. This is an uncharacterized protein from Schizosaccharomyces pombe (strain 972 / ATCC 24843) (Fission yeast).